Reading from the N-terminus, the 122-residue chain is Large ribosomal subunit protein bL12 (122 aa).

This sequence belongs to the bacterial ribosomal protein bL12 family. Homodimer. Part of the ribosomal stalk of the 50S ribosomal subunit. Forms a multimeric L10(L12)X complex, where L10 forms an elongated spine to which 2 to 4 L12 dimers bind in a sequential fashion. Binds GTP-bound translation factors.

Forms part of the ribosomal stalk which helps the ribosome interact with GTP-bound translation factors. Is thus essential for accurate translation. The sequence is that of Large ribosomal subunit protein bL12 from Azotobacter vinelandii (strain DJ / ATCC BAA-1303).